The following is a 168-amino-acid chain: MPLLDSFKVDHTRMHAPAVRVAKTMTTPKGDTITVFDLRFCIPNKEILPEKGIHTLEHLFAGFMRDHLNGAGVEIIDISPMGCRTGFYMSLIGTPSEQQVADAWLASMQDVLNVKDQSKIPELNEYQCGTYLMHSLAEAQQIAQNVLARKVAVNRNGDLALDESLLNA.

Positions 54, 58, and 128 each coordinate Fe cation.

This sequence belongs to the LuxS family. In terms of assembly, homodimer. Fe cation is required as a cofactor.

The catalysed reaction is S-(5-deoxy-D-ribos-5-yl)-L-homocysteine = (S)-4,5-dihydroxypentane-2,3-dione + L-homocysteine. Functionally, involved in the synthesis of autoinducer 2 (AI-2) which is secreted by bacteria and is used to communicate both the cell density and the metabolic potential of the environment. The regulation of gene expression in response to changes in cell density is called quorum sensing. Catalyzes the transformation of S-ribosylhomocysteine (RHC) to homocysteine (HC) and 4,5-dihydroxy-2,3-pentadione (DPD). The chain is S-ribosylhomocysteine lyase from Neisseria gonorrhoeae (strain ATCC 700825 / FA 1090).